The chain runs to 450 residues: Eukaryotic translation initiation factor 3 subunit E (450 aa).

One can recognise a PCI domain in the interval 255-424 (TELFFSPAYI…GTVIMNHPPQ (170 aa)).

Belongs to the eIF-3 subunit E family. As to quaternary structure, component of the eukaryotic translation initiation factor 3 (eIF-3) complex.

It is found in the cytoplasm. In terms of biological role, component of the eukaryotic translation initiation factor 3 (eIF-3) complex, which is involved in protein synthesis of a specialized repertoire of mRNAs and, together with other initiation factors, stimulates binding of mRNA and methionyl-tRNAi to the 40S ribosome. The eIF-3 complex specifically targets and initiates translation of a subset of mRNAs involved in cell proliferation. This Aspergillus clavatus (strain ATCC 1007 / CBS 513.65 / DSM 816 / NCTC 3887 / NRRL 1 / QM 1276 / 107) protein is Eukaryotic translation initiation factor 3 subunit E (int6).